The following is a 150-amino-acid chain: Large ribosomal subunit protein bL9 (150 aa).

It belongs to the bacterial ribosomal protein bL9 family.

Binds to the 23S rRNA. The protein is Large ribosomal subunit protein bL9 of Thioalkalivibrio sulfidiphilus (strain HL-EbGR7).